Consider the following 393-residue polypeptide: MAAASTSSPVVSQPQFTAMNEPQCFYNESIAFFYNRSGKYLATEWNTVSKLVMGLGITVCIFIMLANLLVMVAIYVNRRFHFPIYYLMANLAAADFFAGLAYFYLMFNTGPNTRRLTVSTWLLRQGLIDTTVTASVANLLAIAIERHITVFRMQLHTRMSNRRVVVVIVVIWTMAIVMGAIPSVGWNCICDIENCSNMAPLYSDSYLVFWAIFNLVTFVVMVVLYAHIFGYVRQRTMRMSRHSSGPRRNRDTMMSLLKTVVIVLGAFIICWTPGLVLLLLDVCCPQCDVLAYEKFFLLLAEFNSAMNPIIYSYRDKEMSATFRQILCCQRSENTSGPTEGSDRSASSLNHTILAGVHSNDHSVFRKETKMRGGHHLLRDEQPPPPERPGQGRV.

The Extracellular segment spans residues 1-50 (MAAASTSSPVVSQPQFTAMNEPQCFYNESIAFFYNRSGKYLATEWNTVSK). 2 disulfide bridges follow: Cys24/Cys190 and Cys188/Cys195. Asn27 and Asn35 each carry an N-linked (GlcNAc...) asparagine glycan. Lys39 is an a 1-acyl-sn-glycero-3-phosphate binding site. The chain crosses the membrane as a helical span at residues 51–75 (LVMGLGITVCIFIMLANLLVMVAIY). Topologically, residues 76–83 (VNRRFHFP) are cytoplasmic. A helical membrane pass occupies residues 84–107 (IYYLMANLAAADFFAGLAYFYLMF). The Extracellular portion of the chain corresponds to 108–121 (NTGPNTRRLTVSTW). A helical membrane pass occupies residues 122–144 (LLRQGLIDTTVTASVANLLAIAI). 124–129 (RQGLID) lines the a 1-acyl-sn-glycero-3-phosphate pocket. Topologically, residues 145–163 (ERHITVFRMQLHTRMSNRR) are cytoplasmic. Residues 164–184 (VVVVIVVIWTMAIVMGAIPSV) traverse the membrane as a helical segment. Topologically, residues 185–204 (GWNCICDIENCSNMAPLYSD) are extracellular. A helical membrane pass occupies residues 205–225 (SYLVFWAIFNLVTFVVMVVLY). Trp210 contacts a 1-acyl-sn-glycero-3-phosphate. At 226–255 (AHIFGYVRQRTMRMSRHSSGPRRNRDTMMS) the chain is on the cytoplasmic side. Residues 256-280 (LLKTVVIVLGAFIICWTPGLVLLLL) traverse the membrane as a helical segment. Over 281-294 (DVCCPQCDVLAYEK) the chain is Extracellular. Cys284 and Cys287 form a disulfide bridge. A helical membrane pass occupies residues 295-315 (FFLLLAEFNSAMNPIIYSYRD). Residues 316–393 (KEMSATFRQI…PPERPGQGRV (78 aa)) lie on the Cytoplasmic side of the membrane. At Ser341 the chain carries Phosphoserine. Thr351 carries the phosphothreonine modification. Residues 369–381 (KMRGGHHLLRDEQ) show a composition bias toward basic and acidic residues. Positions 369–393 (KMRGGHHLLRDEQPPPPERPGQGRV) are disordered.

Belongs to the G-protein coupled receptor 1 family. Interacts with RALA and GRK2. Interacts with GNAQ and GNA13. Interacts with CD14; the interaction is enhanced by exposure to bacterial lipopolysaccharide (LPS). N-glycosylated. As to expression, detected in brain cortex and in pituitary pars tuberalis.

It is found in the cell surface. The protein localises to the cell membrane. Its subcellular location is the endosome. In terms of biological role, receptor for lysophosphatidic acid (LPA). Plays a role in the reorganization of the actin cytoskeleton, cell migration, differentiation and proliferation, and thereby contributes to the responses to tissue damage and infectious agents. Activates downstream signaling cascades via the G(i)/G(o), G(12)/G(13), and G(q) families of heteromeric G proteins. Signaling inhibits adenylyl cyclase activity and decreases cellular cAMP levels. Signaling triggers an increase of cytoplasmic Ca(2+) levels. Activates RALA; this leads to the activation of phospholipase C (PLC) and the formation of inositol 1,4,5-trisphosphate. Signaling mediates activation of down-stream MAP kinases. Contributes to the regulation of cell shape. Promotes Rho-dependent reorganization of the actin cytoskeleton in neuronal cells and neurite retraction. Promotes the activation of Rho and the formation of actin stress fibers. Promotes formation of lamellipodia at the leading edge of migrating cells via activation of RAC1. Through its function as LPA receptor, plays a role in chemotaxis and cell migration, including responses to injury and wounding. Plays a role in triggering inflammation in response to bacterial lipopolysaccharide (LPS) via its interaction with CD14. Promotes cell proliferation in response to LPA. Inhibits the intracellular ciliogenesis pathway in response to LPA and through AKT1 activation. Required for normal skeleton development. May play a role in osteoblast differentiation. Required for normal brain development. Required for normal proliferation, survival and maturation of newly formed neurons in the adult dentate gyrus. Plays a role in pain perception and in the initiation of neuropathic pain. The chain is Lysophosphatidic acid receptor 1 (LPAR1) from Ovis aries (Sheep).